The sequence spans 599 residues: Elongation factor 4 (599 aa).

Residues Ser-5 to Gln-187 enclose the tr-type G domain. GTP-binding positions include Asp-17 to Thr-22 and Asn-134 to Asp-137.

It belongs to the TRAFAC class translation factor GTPase superfamily. Classic translation factor GTPase family. LepA subfamily.

The protein resides in the cell inner membrane. It carries out the reaction GTP + H2O = GDP + phosphate + H(+). Required for accurate and efficient protein synthesis under certain stress conditions. May act as a fidelity factor of the translation reaction, by catalyzing a one-codon backward translocation of tRNAs on improperly translocated ribosomes. Back-translocation proceeds from a post-translocation (POST) complex to a pre-translocation (PRE) complex, thus giving elongation factor G a second chance to translocate the tRNAs correctly. Binds to ribosomes in a GTP-dependent manner. This chain is Elongation factor 4, found in Azotobacter vinelandii (strain DJ / ATCC BAA-1303).